Here is a 101-residue protein sequence, read N- to C-terminus: NAD(P)H-quinone oxidoreductase subunit 4L, chloroplastic (101 aa).

3 helical membrane-spanning segments follow: residues 2–22 (YIEN…YGLL), 32–52 (MCLE…SNFI), and 61–81 (VIAI…LALV).

This sequence belongs to the complex I subunit 4L family. In terms of assembly, NDH is composed of at least 16 different subunits, 5 of which are encoded in the nucleus.

It localises to the plastid. The protein resides in the chloroplast thylakoid membrane. It catalyses the reaction a plastoquinone + NADH + (n+1) H(+)(in) = a plastoquinol + NAD(+) + n H(+)(out). The enzyme catalyses a plastoquinone + NADPH + (n+1) H(+)(in) = a plastoquinol + NADP(+) + n H(+)(out). Its function is as follows. NDH shuttles electrons from NAD(P)H:plastoquinone, via FMN and iron-sulfur (Fe-S) centers, to quinones in the photosynthetic chain and possibly in a chloroplast respiratory chain. The immediate electron acceptor for the enzyme in this species is believed to be plastoquinone. Couples the redox reaction to proton translocation, and thus conserves the redox energy in a proton gradient. The chain is NAD(P)H-quinone oxidoreductase subunit 4L, chloroplastic from Mesostigma viride (Green alga).